Consider the following 84-residue polypeptide: Small, acid-soluble spore protein gamma-type (84 aa).

Composition is skewed to polar residues over residues 1-25 (MANSNNFSKTNAQQVRKQNQQSAAG) and 34-44 (ASETNAQQVRK). The tract at residues 1–84 (MANSNNFSKT…SAEQNKQQNS (84 aa)) is disordered. 2 repeats span residues 21 to 47 (QSAAGQGQFGTEFASETNAQQVRKQNQ) and 48 to 74 (QSAGQQGQFGTEFASETDAQQVRQQNQ). 2 stretches are compositionally biased toward low complexity: residues 45–57 (QNQQSAGQQGQFG) and 71–84 (QQNQSAEQNKQQNS).

Belongs to the gamma-type SASP family.

In terms of biological role, SASP are proteins degraded in the first minutes of spore germination and provide amino acids for both new protein synthesis and metabolism. These proteins may be involved in dormant spore's high resistance to UV light. The protein is Small, acid-soluble spore protein gamma-type (sspE) of Bacillus subtilis (strain 168).